The following is a 326-amino-acid chain: Deoxyuridine 5'-triphosphate nucleotidohydrolase (326 aa).

Residues 218-220 and 321-322 contribute to the substrate site; these read RSS and FG.

Belongs to the dUTPase family. It depends on Mg(2+) as a cofactor.

It carries out the reaction dUTP + H2O = dUMP + diphosphate + H(+). Its function is as follows. Involved in nucleotide metabolism: produces dUMP, the immediate precursor of thymidine nucleotides and decreases the intracellular concentration of dUTP to avoid uracil incorporation into viral DNA. In Equus caballus (Horse), this protein is Deoxyuridine 5'-triphosphate nucleotidohydrolase.